A 399-amino-acid polypeptide reads, in one-letter code: MAREKFERNKPHVNIGTIGHVDHGKTTLTAAITSVLAKKGQAKVQDYAEIDGAPEERERGITINTAHVEYETDGRHYAHVDCPGHADYVKNMITGAAQMDGAILVCAATDGPMAQTKEHILLAKQVGVPALVVALNKCDMVDDEEIIELVEMEIRELLSSYDFPGDDIPIVQVSGLKAIEGEAEWEAKIDELMEAVDASIPEPEREIEKPFLMAVEDVFSITGRGTVATGRIERGKVKKGEEIEIVGIRDSRKTTVTGVEMFRKDLDEGLAGDNCGLLLRGIEKEDIERGMVLVKPGSITPHTKFEGQVYVLKKEEGGRHTPFFAGYRPQFYIRTTDVTGQITAFTAEDGSNVEMVMPGDNIKMTGELICPVAIEQGMRFAIREGGRTIGAGVVSKIIE.

The region spanning 10–204 (KPHVNIGTIG…AVDASIPEPE (195 aa)) is the tr-type G domain. The G1 stretch occupies residues 19–26 (GHVDHGKT). 19-26 (GHVDHGKT) contributes to the GTP binding site. Mg(2+) is bound at residue T26. The G2 stretch occupies residues 60 to 64 (GITIN). The G3 stretch occupies residues 81–84 (DCPG). GTP contacts are provided by residues 81 to 85 (DCPGH) and 136 to 139 (NKCD). The tract at residues 136–139 (NKCD) is G4. The G5 stretch occupies residues 174 to 176 (SGL).

The protein belongs to the TRAFAC class translation factor GTPase superfamily. Classic translation factor GTPase family. EF-Tu/EF-1A subfamily. As to quaternary structure, monomer.

It is found in the cytoplasm. It carries out the reaction GTP + H2O = GDP + phosphate + H(+). GTP hydrolase that promotes the GTP-dependent binding of aminoacyl-tRNA to the A-site of ribosomes during protein biosynthesis. This Prochlorococcus marinus (strain MIT 9313) protein is Elongation factor Tu.